Reading from the N-terminus, the 499-residue chain is Thermostable carboxypeptidase 1 (499 aa).

Residues 6-499 form the Peptidase M32 domain; the sequence is QNETIKQILA…FVRWVKEKYL (494 aa). Residues 238-240 carry the HPF motif; sequence HPF. The DXRXT signature appears at 248–252; it reads DVRIT. His269 is a binding site for Co(2+). Residues 269–273 carry the HEXXH motif; that stretch reads HEFGH. Catalysis depends on Glu270, which acts as the Proton donor/acceptor. Residues His273 and Glu299 each coordinate Co(2+). An HES/GQ motif is present at residues 298-301; the sequence is HESQ. An I/NRXXA/SD motif is present at residues 350–355; the sequence is IRTEAD. The short motif at 405-412 is the GXXQDXHW element; it reads GILQDIHW.

This sequence belongs to the peptidase M32 family. As to quaternary structure, homodimer. It depends on Co(2+) as a cofactor. The cofactor is Mn(2+).

The catalysed reaction is Release of a C-terminal amino acid with broad specificity, except for -Pro.. EDTA and DTT reversibly abolish carboxypeptidase activity. Broad specificity carboxypetidase that releases amino acids sequentially from the C-terminus, including neutral, aromatic, polar and basic residues, but not Pro, Gly, Asp and Glu. In Pyrococcus furiosus (strain ATCC 43587 / DSM 3638 / JCM 8422 / Vc1), this protein is Thermostable carboxypeptidase 1.